Here is a 159-residue protein sequence, read N- to C-terminus: ATP synthase subunit b 2 (159 aa).

The chain crosses the membrane as a helical span at residues Met-1–Met-21.

The protein belongs to the ATPase B chain family. F-type ATPases have 2 components, F(1) - the catalytic core - and F(0) - the membrane proton channel. F(1) has five subunits: alpha(3), beta(3), gamma(1), delta(1), epsilon(1). F(0) has three main subunits: a(1), b(2) and c(10-14). The alpha and beta chains form an alternating ring which encloses part of the gamma chain. F(1) is attached to F(0) by a central stalk formed by the gamma and epsilon chains, while a peripheral stalk is formed by the delta and b chains.

It localises to the cell inner membrane. Its function is as follows. F(1)F(0) ATP synthase produces ATP from ADP in the presence of a proton or sodium gradient. F-type ATPases consist of two structural domains, F(1) containing the extramembraneous catalytic core and F(0) containing the membrane proton channel, linked together by a central stalk and a peripheral stalk. During catalysis, ATP synthesis in the catalytic domain of F(1) is coupled via a rotary mechanism of the central stalk subunits to proton translocation. Component of the F(0) channel, it forms part of the peripheral stalk, linking F(1) to F(0). The sequence is that of ATP synthase subunit b 2 from Brucella canis (strain ATCC 23365 / NCTC 10854 / RM-666).